The following is a 714-amino-acid chain: Hormonally up-regulated neu tumor-associated kinase (714 aa).

Residues 1-15 (MPAAAGDGLLGEPAA) are compositionally biased toward low complexity. The interval 1-26 (MPAAAGDGLLGEPAAPGGGGGAEDAA) is disordered. Residues 62 to 320 (LIGSRKLGEG…IQQALANRWL (259 aa)) enclose the Protein kinase domain. Residues 68 to 76 (LGEGSFAKV) and Lys91 contribute to the ATP site. Catalysis depends on Asp186, which acts as the Proton acceptor. Basic and acidic residues predominate over residues 437-461 (KKPKEQEKRGDFLHRPFSKKLDKNL). 3 disordered regions span residues 437 to 471 (KKPK…SGSL), 518 to 552 (MEFI…HKED), and 590 to 615 (ARRN…HTPL). Residues 599-611 (LSPGLPSGSMSPL) are compositionally biased toward low complexity.

It belongs to the protein kinase superfamily. CAMK Ser/Thr protein kinase family. SNF1 subfamily.

The catalysed reaction is L-seryl-[protein] + ATP = O-phospho-L-seryl-[protein] + ADP + H(+). It catalyses the reaction L-threonyl-[protein] + ATP = O-phospho-L-threonyl-[protein] + ADP + H(+). This chain is Hormonally up-regulated neu tumor-associated kinase (HUNK), found in Homo sapiens (Human).